Here is a 201-residue protein sequence, read N- to C-terminus: Two-component response regulator ORR9 (201 aa).

The Response regulatory domain occupies 10–142 (HVLAVDDSLP…DMSKLKPHIL (133 aa)). D75 carries the post-translational modification 4-aspartylphosphate. The interval 149-201 (HYQQEQNLQSNSESNNSSNPTSENSSSSTSSNSHKRKAVDEEILPHTIRPRHS) is disordered. Low complexity predominate over residues 158–180 (SNSESNNSSNPTSENSSSSTSSN).

It belongs to the ARR family. Type-A subfamily. In terms of processing, two-component system major event consists of a His-to-Asp phosphorelay between a sensor histidine kinase (HK) and a response regulator (RR). In plants, the His-to-Asp phosphorelay involves an additional intermediate named Histidine-containing phosphotransfer protein (HPt). This multistep phosphorelay consists of a His-Asp-His-Asp sequential transfer of a phosphate group between first a His and an Asp of the HK protein, followed by the transfer to a conserved His of the HPt protein and finally the transfer to an Asp in the receiver domain of the RR protein.

Functions as a response regulator involved in His-to-Asp phosphorelay signal transduction system. Phosphorylation of the Asp residue in the receiver domain activates the ability of the protein to promote the transcription of target genes. Type-A response regulators seem to act as negative regulators of the cytokinin signaling. This chain is Two-component response regulator ORR9, found in Oryza sativa subsp. japonica (Rice).